A 199-amino-acid polypeptide reads, in one-letter code: 7-methyl-GTP pyrophosphatase (199 aa).

The active-site Proton acceptor is Asp-76.

The protein belongs to the Maf family. YceF subfamily. The cofactor is a divalent metal cation.

Its subcellular location is the cytoplasm. The catalysed reaction is N(7)-methyl-GTP + H2O = N(7)-methyl-GMP + diphosphate + H(+). Its function is as follows. Nucleoside triphosphate pyrophosphatase that hydrolyzes 7-methyl-GTP (m(7)GTP). May have a dual role in cell division arrest and in preventing the incorporation of modified nucleotides into cellular nucleic acids. This is 7-methyl-GTP pyrophosphatase from Rhizobium meliloti (strain 1021) (Ensifer meliloti).